The sequence spans 329 residues: GTP 3',8-cyclase (329 aa).

The Radical SAM core domain occupies 8–234 (AFARKFYYLR…QLRSRADGPA (227 aa)). Arg-17 lines the GTP pocket. [4Fe-4S] cluster contacts are provided by Cys-24 and Cys-28. Tyr-30 is an S-adenosyl-L-methionine binding site. Cys-31 contacts [4Fe-4S] cluster. Residue Arg-68 participates in GTP binding. Gly-72 is an S-adenosyl-L-methionine binding site. Residue Thr-99 coordinates GTP. Residue Ser-123 coordinates S-adenosyl-L-methionine. GTP is bound at residue Lys-160. Met-194 is a binding site for S-adenosyl-L-methionine. [4Fe-4S] cluster is bound by residues Cys-257 and Cys-260. Position 262–264 (262–264 (RLR)) interacts with GTP. Residue Cys-274 coordinates [4Fe-4S] cluster.

Belongs to the radical SAM superfamily. MoaA family. In terms of assembly, monomer and homodimer. Requires [4Fe-4S] cluster as cofactor.

It carries out the reaction GTP + AH2 + S-adenosyl-L-methionine = (8S)-3',8-cyclo-7,8-dihydroguanosine 5'-triphosphate + 5'-deoxyadenosine + L-methionine + A + H(+). Its pathway is cofactor biosynthesis; molybdopterin biosynthesis. Its function is as follows. Catalyzes the cyclization of GTP to (8S)-3',8-cyclo-7,8-dihydroguanosine 5'-triphosphate. The chain is GTP 3',8-cyclase from Cronobacter sakazakii (strain ATCC BAA-894) (Enterobacter sakazakii).